The following is a 155-amino-acid chain: Endoribonuclease YbeY (155 aa).

Positions 117, 121, and 127 each coordinate Zn(2+).

It belongs to the endoribonuclease YbeY family. Zn(2+) serves as cofactor.

It is found in the cytoplasm. In terms of biological role, single strand-specific metallo-endoribonuclease involved in late-stage 70S ribosome quality control and in maturation of the 3' terminus of the 16S rRNA. This is Endoribonuclease YbeY from Psychrobacter cryohalolentis (strain ATCC BAA-1226 / DSM 17306 / VKM B-2378 / K5).